Reading from the N-terminus, the 138-residue chain is Large-conductance mechanosensitive channel (138 aa).

2 helical membrane-spanning segments follow: residues 10-30 and 76-96; these read FAMRGNVVDLAVGVIIGAAFG and GSFIQTIFDFVIVAFAIFLAI.

The protein belongs to the MscL family. As to quaternary structure, homopentamer.

It localises to the cell inner membrane. Functionally, channel that opens in response to stretch forces in the membrane lipid bilayer. May participate in the regulation of osmotic pressure changes within the cell. The chain is Large-conductance mechanosensitive channel from Serratia proteamaculans (strain 568).